A 99-amino-acid chain; its full sequence is Sarcosine oxidase subunit delta (99 aa).

Zn(2+) is bound by residues cysteine 6, cysteine 9, histidine 59, and cysteine 63.

The protein belongs to the SoxD family. Heterotetramer composed of subunits alpha (SoxA), beta (SoxB), gamma (SoxG) and delta (SoxD).

It is found in the cytoplasm. The enzyme catalyses sarcosine + (6S)-5,6,7,8-tetrahydrofolate + O2 = (6R)-5,10-methylene-5,6,7,8-tetrahydrofolate + glycine + H2O2. It catalyses the reaction sarcosine + O2 + H2O = formaldehyde + glycine + H2O2. Inhibited by Zn(2+), Cu(2+), Cd(2+), Hg(2+), Ag(+), p-chloromercuribenzoate (p-CMB), iodoacetamide, N-ethylmaleimide, CN(-), o-phenanthroline and sodium lauryl sulfate. Functionally, in the presence of tetrahydrofolate, catalyzes the oxidative demethylation of sarcosine to yield glycine, 5,10-methylenetetrahydrofolate and hydrogen peroxide. In the absence of tetrahydrofolate, catalyzes the oxidative demethylation of sarcosine to yield glycine, formaldehyde and hydrogen peroxide. Can also use N-methyl-L-alanine and N-ethyl-L-glycine. Is very specific for oxygen as an acceptor. The protein is Sarcosine oxidase subunit delta of Corynebacterium sp. (strain U-96).